A 100-amino-acid polypeptide reads, in one-letter code: Small ribosomal subunit protein uS14 (100 aa).

Belongs to the universal ribosomal protein uS14 family. As to quaternary structure, part of the 30S ribosomal subunit. Contacts proteins S3 and S10.

Functionally, binds 16S rRNA, required for the assembly of 30S particles and may also be responsible for determining the conformation of the 16S rRNA at the A site. The chain is Small ribosomal subunit protein uS14 from Synechocystis sp. (strain ATCC 27184 / PCC 6803 / Kazusa).